Consider the following 91-residue polypeptide: Potassium channel toxin BuTXK-beta (91 aa).

The first 20 residues, 1–20, serve as a signal peptide directing secretion; that stretch reads MQRNLVVLLLLGMVALSSCG. The propeptide occupies 21 to 27; sequence LREKHFQ. Positions 54–91 constitute a BetaSPN-type CS-alpha/beta domain; sequence QFGCPAYQGYCDDHCQDIKKEEGFCHGMKCKCGIPMGF. 3 cysteine pairs are disulfide-bonded: cysteine 57–cysteine 78, cysteine 64–cysteine 83, and cysteine 68–cysteine 85.

Belongs to the long chain scorpion toxin family. Class 1 subfamily. Expressed by the venom gland.

Its subcellular location is the secreted. Inhibits voltage-gated potassium channel. The chain is Potassium channel toxin BuTXK-beta from Buthus israelis (Israeli scorpion).